Consider the following 2527-residue polypeptide: Leucine-rich repeat serine/threonine-protein kinase 2 (2527 aa).

The segment at 1–969 is required for RAB29-mediated activation; that stretch reads MASGSCQGCE…RSSKLQSHMR (969 aa). Residues 319-348 are a coiled coil; that stretch reads LTETIFLNQDLEEKNENQENDDEGEEDKLF. Residues Ser-910, Ser-935, Ser-955, and Ser-973 each carry the phosphoserine modification. LRR repeat units follow at residues 983–1004, 1012–1033, 1036–1057, 1059–1080, 1084–1105, 1108–1129, 1130–1150, 1156–1171, 1174–1196, 1197–1218, 1221–1245, 1246–1267, and 1269–1291; these read YITS…SQKC, HLEK…LCET, SLTH…LLKM, CIAN…DPTV, TLKQ…LTDV, KLEQ…LRLK, ELKI…NFLE, ESFS…MPFL, SMTI…LNLP, HLRS…AHWK, NLRE…YLWS, RVEK…IGCL, and NLTS…MGKL. Residue Ser-1292 is modified to Phosphoserine; by autocatalysis. Positions 1328–1511 constitute a Roc domain; it reads KAVPYNRMKL…KTIINESLNF (184 aa). Residue 1341–1348 coordinates GTP; sequence GNTGSGKT. Phosphoserine is present on Ser-1444. A COR domain is found at 1546-1740; it reads PVIDRKRLLQ…RMYWRQGIYL (195 aa). One can recognise a Protein kinase domain in the interval 1879–2138; it reads QAPEFLLGDG…FDILNSAELV (260 aa). ATP is bound by residues Leu-1885, Asp-1887, Gly-1888, Gly-1891, Val-1893, Ala-1904, Lys-1906, Met-1947, Glu-1948, Ala-1950, Ser-1954, and Arg-1957. The Proton acceptor role is filled by Asp-1994. Residues His-1998, Leu-2001, Ala-2016, and Asp-2017 each coordinate ATP. 2098–2121 is a GTP binding site; that stretch reads EYGCAPWPMVEKLIKQCLKENPQE. WD repeat units lie at residues 2139–2183, 2188–2228, 2233–2276, 2281–2327, 2333–2377, 2402–2438, and 2443–2497; these read CLTR…SFLD, GYTS…LVIN, KKRH…AIFE, KLKG…FSFS, QKLI…EVWD, KESK…LLLD, and RLIR…TVWD. Residue 2295-2298 participates in GTP binding; sequence NVST.

This sequence belongs to the protein kinase superfamily. TKL Ser/Thr protein kinase family. As to quaternary structure, homodimer. Homotetramer; when activated by GTP-bound RAB29. Interacts with PRKN, PRDX3, and TPCN2. Interacts with VPS35. Interacts (via N-terminus) with RAB29; this interaction is direct and stimulates kinase activity. Interacts (via ROC domain) with SEC16A. Interacts with APP; interaction promotes phosphorylation of 'Thr-743' of APP. Interacts with MAPT. Interacts with RAB8A, RAB10, and RAB12. Interacts (via N-terminus) with RAB32. Interacts with YWHAG; this interaction is dependent on phosphorylation of Ser-910 and either Ser-935 or Ser-1444. Interacts with SFN; this interaction is dependent on phosphorylation of Ser-910 and/or Ser-935. It depends on Mg(2+) as a cofactor. In terms of processing, autophosphorylated at Ser-1292; autophosphorylation is stimulated by RAB29. Phosphorylation of Ser-910 and either Ser-935 or Ser-1444 facilitates interaction with YWHAG. Phosphorylation of Ser-910 and/or Ser-935 facilitates interaction with SFN. Post-translationally, ubiquitinated by TRIM1; undergoes 'Lys-48'-linked polyubiquitination leading to proteasomal degradation. As to expression, expressed in pyramidal neurons in all cortical laminae of the visual cortex, in neurons of the substantia nigra pars compacta and caudate putamen (at protein level). Expressed in neutrophils (at protein level). Expressed in the brain. Expressed throughout the adult brain, but at a lower level than in heart and liver. Also expressed in placenta, lung, skeletal muscle, kidney and pancreas. In the brain, expressed in the cerebellum, cerebral cortex, medulla, spinal cord occipital pole, frontal lobe, temporal lobe and putamen. Expression is particularly high in brain dopaminoceptive areas.

It localises to the cytoplasmic vesicle. It is found in the perikaryon. The protein resides in the golgi apparatus membrane. The protein localises to the cell projection. Its subcellular location is the axon. It localises to the dendrite. It is found in the endoplasmic reticulum membrane. The protein resides in the secretory vesicle. The protein localises to the synaptic vesicle membrane. Its subcellular location is the endosome. It localises to the lysosome. It is found in the mitochondrion outer membrane. The protein resides in the cytoplasm. The protein localises to the cytoskeleton. Its subcellular location is the phagosome. The catalysed reaction is L-threonyl-[protein] + ATP = O-phospho-L-threonyl-[protein] + ADP + H(+). The enzyme catalyses L-seryl-[protein] + ATP = O-phospho-L-seryl-[protein] + ADP + H(+). It carries out the reaction GTP + H2O = GDP + phosphate + H(+). With respect to regulation, kinase activity is regulated by the GTPase activity of the ROC domain. GTP-bound LRRK2 kinase activity is stimulated by RAB29. Phosphorylation of RAB10 'Thr-73' is stimulated by RAB29 and RAB32. Inhibited by small molecule inhibitor MLi-2. Its function is as follows. Serine/threonine-protein kinase which phosphorylates a broad range of proteins involved in multiple processes such as neuronal plasticity, innate immunity, autophagy, and vesicle trafficking. Is a key regulator of RAB GTPases by regulating the GTP/GDP exchange and interaction partners of RABs through phosphorylation. Phosphorylates RAB3A, RAB3B, RAB3C, RAB3D, RAB5A, RAB5B, RAB5C, RAB8A, RAB8B, RAB10, RAB12, RAB29, RAB35, and RAB43. Regulates the RAB3IP-catalyzed GDP/GTP exchange for RAB8A through the phosphorylation of 'Thr-72' on RAB8A. Inhibits the interaction between RAB8A and GDI1 and/or GDI2 by phosphorylating 'Thr-72' on RAB8A. Regulates primary ciliogenesis through phosphorylation of RAB8A and RAB10, which promotes SHH signaling in the brain. Together with RAB29, plays a role in the retrograde trafficking pathway for recycling proteins, such as mannose-6-phosphate receptor (M6PR), between lysosomes and the Golgi apparatus in a retromer-dependent manner. Regulates neuronal process morphology in the intact central nervous system (CNS). Plays a role in synaptic vesicle trafficking. Plays an important role in recruiting SEC16A to endoplasmic reticulum exit sites (ERES) and in regulating ER to Golgi vesicle-mediated transport and ERES organization. Positively regulates autophagy through a calcium-dependent activation of the CaMKK/AMPK signaling pathway. The process involves activation of nicotinic acid adenine dinucleotide phosphate (NAADP) receptors, increase in lysosomal pH, and calcium release from lysosomes. Phosphorylates PRDX3. By phosphorylating APP on 'Thr-743', which promotes the production and the nuclear translocation of the APP intracellular domain (AICD), regulates dopaminergic neuron apoptosis. Acts as a positive regulator of innate immunity by mediating phosphorylation of RIPK2 downstream of NOD1 and NOD2, thereby enhancing RIPK2 activation. Independent of its kinase activity, inhibits the proteasomal degradation of MAPT, thus promoting MAPT oligomerization and secretion. In addition, has GTPase activity via its Roc domain which regulates LRRK2 kinase activity. Recruited by RAB29/RAB7L1 to overloaded lysosomes where it phosphorylates and stabilizes RAB8A and RAB10 which promote lysosomal content release and suppress lysosomal enlargement through the EHBP1 and EHBP1L1 effector proteins. The protein is Leucine-rich repeat serine/threonine-protein kinase 2 (LRRK2) of Homo sapiens (Human).